The following is a 487-amino-acid chain: Proline--tRNA ligase (487 aa).

This sequence belongs to the class-II aminoacyl-tRNA synthetase family. ProS type 3 subfamily. In terms of assembly, homodimer.

It localises to the cytoplasm. The catalysed reaction is tRNA(Pro) + L-proline + ATP = L-prolyl-tRNA(Pro) + AMP + diphosphate. Catalyzes the attachment of proline to tRNA(Pro) in a two-step reaction: proline is first activated by ATP to form Pro-AMP and then transferred to the acceptor end of tRNA(Pro). The protein is Proline--tRNA ligase of Pyrobaculum neutrophilum (strain DSM 2338 / JCM 9278 / NBRC 100436 / V24Sta) (Thermoproteus neutrophilus).